Here is a 257-residue protein sequence, read N- to C-terminus: MNFPDSSLFTPNFAYENDLDFSSLITPSTRVSFQEPKPCNPVIHSAGIENDGRQNCETTMTLSEIMKGDDEPKNKRAKHKELERQRRQENTSLFKILRYLLPSQYIKGKRSSADHVLEAVNYIKDLQKKIKEVSEKRDRIKRSITHPSSRGEFSIRSLASSTCSCVGDTNIAVVVRPCLIGLEIVVSCCNRHESCLSSVLQLLAQEQCFNIVSCISTRLHQGFIHTIASEVEEGIEVYFSELQEKIIKIGTSRVTTR.

A bHLH domain is found at 74 to 126 (NKRAKHKELERQRRQENTSLFKILRYLLPSQYIKGKRSSADHVLEAVNYIKDL).

In terms of assembly, homodimer. In terms of tissue distribution, expressed in roots, leaves, stems, and flowers.

The protein resides in the nucleus. The polypeptide is Transcription factor bHLH55 (BHLH55) (Arabidopsis thaliana (Mouse-ear cress)).